We begin with the raw amino-acid sequence, 211 residues long: Protein-L-isoaspartate O-methyltransferase (211 aa).

Ser62 is a catalytic residue.

It belongs to the methyltransferase superfamily. L-isoaspartyl/D-aspartyl protein methyltransferase family.

Its subcellular location is the cytoplasm. It carries out the reaction [protein]-L-isoaspartate + S-adenosyl-L-methionine = [protein]-L-isoaspartate alpha-methyl ester + S-adenosyl-L-homocysteine. Its function is as follows. Catalyzes the methyl esterification of L-isoaspartyl residues in peptides and proteins that result from spontaneous decomposition of normal L-aspartyl and L-asparaginyl residues. It plays a role in the repair and/or degradation of damaged proteins. This chain is Protein-L-isoaspartate O-methyltransferase, found in Shewanella amazonensis (strain ATCC BAA-1098 / SB2B).